We begin with the raw amino-acid sequence, 141 residues long: Large ribosomal subunit protein uL11 (141 aa).

Belongs to the universal ribosomal protein uL11 family. As to quaternary structure, part of the ribosomal stalk of the 50S ribosomal subunit. Interacts with L10 and the large rRNA to form the base of the stalk. L10 forms an elongated spine to which L12 dimers bind in a sequential fashion forming a multimeric L10(L12)X complex. Post-translationally, one or more lysine residues are methylated.

In terms of biological role, forms part of the ribosomal stalk which helps the ribosome interact with GTP-bound translation factors. This Synechococcus sp. (strain CC9902) protein is Large ribosomal subunit protein uL11.